Here is a 393-residue protein sequence, read N- to C-terminus: Chalcone synthase 2 (393 aa).

Cys-166 is a catalytic residue.

Belongs to the thiolase-like superfamily. Chalcone/stilbene synthases family.

The enzyme catalyses (E)-4-coumaroyl-CoA + 3 malonyl-CoA + 3 H(+) = 2',4,4',6'-tetrahydroxychalcone + 3 CO2 + 4 CoA. The protein operates within secondary metabolite biosynthesis; flavonoid biosynthesis. The primary product of this enzyme is 4,2',4',6'-tetrahydroxychalcone (also termed naringenin-chalcone or chalcone) which can under specific conditions spontaneously isomerize into naringenin. The protein is Chalcone synthase 2 (CHS2) of Ruta graveolens (Common rue).